Here is a 204-residue protein sequence, read N- to C-terminus: Large ribosomal subunit protein bL17 (204 aa).

The disordered stretch occupies residues 124-204 (QAVGEAERAR…DDDGPAESKS (81 aa)). Basic and acidic residues predominate over residues 128 to 142 (EAERARGTRFSERRK). Over residues 156–191 (SESPTAAAVAAQSAEEQAPVEETLTAQAAETSAATV) the composition is skewed to low complexity. Positions 192–204 (EETDDDGPAESKS) are enriched in acidic residues.

This sequence belongs to the bacterial ribosomal protein bL17 family. As to quaternary structure, part of the 50S ribosomal subunit. Contacts protein L32.

In Frankia alni (strain DSM 45986 / CECT 9034 / ACN14a), this protein is Large ribosomal subunit protein bL17.